A 237-amino-acid polypeptide reads, in one-letter code: Small ribosomal subunit protein uS2c (237 aa).

Belongs to the universal ribosomal protein uS2 family.

The protein resides in the plastid. In Epifagus virginiana (Beechdrops), this protein is Small ribosomal subunit protein uS2c (rps2).